Consider the following 77-residue polypeptide: Large ribosomal subunit protein bL28 (77 aa).

It belongs to the bacterial ribosomal protein bL28 family.

This chain is Large ribosomal subunit protein bL28, found in Variovorax paradoxus (strain S110).